The following is a 428-amino-acid chain: Serine--tRNA ligase (428 aa).

T231–E233 contributes to the L-serine binding site. ATP contacts are provided by residues R262–E264 and V278. E285 is a binding site for L-serine. Position 349-352 (E349–S352) interacts with ATP. S384 provides a ligand contact to L-serine.

Belongs to the class-II aminoacyl-tRNA synthetase family. Type-1 seryl-tRNA synthetase subfamily. In terms of assembly, homodimer. The tRNA molecule binds across the dimer.

The protein resides in the cytoplasm. It carries out the reaction tRNA(Ser) + L-serine + ATP = L-seryl-tRNA(Ser) + AMP + diphosphate + H(+). The enzyme catalyses tRNA(Sec) + L-serine + ATP = L-seryl-tRNA(Sec) + AMP + diphosphate + H(+). Its pathway is aminoacyl-tRNA biosynthesis; selenocysteinyl-tRNA(Sec) biosynthesis; L-seryl-tRNA(Sec) from L-serine and tRNA(Sec): step 1/1. Its function is as follows. Catalyzes the attachment of serine to tRNA(Ser). Is also able to aminoacylate tRNA(Sec) with serine, to form the misacylated tRNA L-seryl-tRNA(Sec), which will be further converted into selenocysteinyl-tRNA(Sec). This chain is Serine--tRNA ligase, found in Chlamydia trachomatis serovar L2 (strain ATCC VR-902B / DSM 19102 / 434/Bu).